We begin with the raw amino-acid sequence, 156 residues long: D-aminoacyl-tRNA deacylase (156 aa).

Residues 142-143 (GP) carry the Gly-cisPro motif, important for rejection of L-amino acids motif.

The protein belongs to the DTD family. As to quaternary structure, homodimer.

It is found in the cytoplasm. It catalyses the reaction glycyl-tRNA(Ala) + H2O = tRNA(Ala) + glycine + H(+). It carries out the reaction a D-aminoacyl-tRNA + H2O = a tRNA + a D-alpha-amino acid + H(+). Its function is as follows. An aminoacyl-tRNA editing enzyme that deacylates mischarged D-aminoacyl-tRNAs. Also deacylates mischarged glycyl-tRNA(Ala), protecting cells against glycine mischarging by AlaRS. Acts via tRNA-based rather than protein-based catalysis; rejects L-amino acids rather than detecting D-amino acids in the active site. By recycling D-aminoacyl-tRNA to D-amino acids and free tRNA molecules, this enzyme counteracts the toxicity associated with the formation of D-aminoacyl-tRNA entities in vivo and helps enforce protein L-homochirality. This Cupriavidus pinatubonensis (strain JMP 134 / LMG 1197) (Cupriavidus necator (strain JMP 134)) protein is D-aminoacyl-tRNA deacylase.